We begin with the raw amino-acid sequence, 184 residues long: ATP synthase subunit b, chloroplastic (184 aa).

Residues 27–49 (LATNPINLSVVLGVLIFFGKGVL) form a helical membrane-spanning segment.

It belongs to the ATPase B chain family. In terms of assembly, F-type ATPases have 2 components, F(1) - the catalytic core - and F(0) - the membrane proton channel. F(1) has five subunits: alpha(3), beta(3), gamma(1), delta(1), epsilon(1). F(0) has four main subunits: a(1), b(1), b'(1) and c(10-14). The alpha and beta chains form an alternating ring which encloses part of the gamma chain. F(1) is attached to F(0) by a central stalk formed by the gamma and epsilon chains, while a peripheral stalk is formed by the delta, b and b' chains.

It is found in the plastid. The protein resides in the chloroplast thylakoid membrane. In terms of biological role, f(1)F(0) ATP synthase produces ATP from ADP in the presence of a proton or sodium gradient. F-type ATPases consist of two structural domains, F(1) containing the extramembraneous catalytic core and F(0) containing the membrane proton channel, linked together by a central stalk and a peripheral stalk. During catalysis, ATP synthesis in the catalytic domain of F(1) is coupled via a rotary mechanism of the central stalk subunits to proton translocation. Its function is as follows. Component of the F(0) channel, it forms part of the peripheral stalk, linking F(1) to F(0). The chain is ATP synthase subunit b, chloroplastic from Nicotiana sylvestris (Wood tobacco).